Here is a 434-residue protein sequence, read N- to C-terminus: Serine hydroxymethyltransferase (434 aa).

(6S)-5,6,7,8-tetrahydrofolate is bound by residues Leu133 and Gly137 to Leu139. Lys242 is modified (N6-(pyridoxal phosphate)lysine). Residue Ser366–Phe368 coordinates (6S)-5,6,7,8-tetrahydrofolate.

This sequence belongs to the SHMT family. As to quaternary structure, homodimer. Pyridoxal 5'-phosphate is required as a cofactor.

The protein resides in the cytoplasm. The enzyme catalyses (6R)-5,10-methylene-5,6,7,8-tetrahydrofolate + glycine + H2O = (6S)-5,6,7,8-tetrahydrofolate + L-serine. The protein operates within one-carbon metabolism; tetrahydrofolate interconversion. It participates in amino-acid biosynthesis; glycine biosynthesis; glycine from L-serine: step 1/1. Its function is as follows. Catalyzes the reversible interconversion of serine and glycine with tetrahydrofolate (THF) serving as the one-carbon carrier. This reaction serves as the major source of one-carbon groups required for the biosynthesis of purines, thymidylate, methionine, and other important biomolecules. Also exhibits THF-independent aldolase activity toward beta-hydroxyamino acids, producing glycine and aldehydes, via a retro-aldol mechanism. This chain is Serine hydroxymethyltransferase, found in Erythrobacter litoralis (strain HTCC2594).